Reading from the N-terminus, the 440-residue chain is 3-phosphoshikimate 1-carboxyvinyltransferase (440 aa).

Lysine 26, serine 27, and arginine 31 together coordinate 3-phosphoshikimate. Residue lysine 26 participates in phosphoenolpyruvate binding. Glycine 99 and arginine 127 together coordinate phosphoenolpyruvate. Serine 172, glutamine 174, aspartate 320, and lysine 347 together coordinate 3-phosphoshikimate. Glutamine 174 serves as a coordination point for phosphoenolpyruvate. The active-site Proton acceptor is aspartate 320. Phosphoenolpyruvate contacts are provided by arginine 351 and arginine 392.

This sequence belongs to the EPSP synthase family. As to quaternary structure, monomer.

It localises to the cytoplasm. The catalysed reaction is 3-phosphoshikimate + phosphoenolpyruvate = 5-O-(1-carboxyvinyl)-3-phosphoshikimate + phosphate. It participates in metabolic intermediate biosynthesis; chorismate biosynthesis; chorismate from D-erythrose 4-phosphate and phosphoenolpyruvate: step 6/7. Functionally, catalyzes the transfer of the enolpyruvyl moiety of phosphoenolpyruvate (PEP) to the 5-hydroxyl of shikimate-3-phosphate (S3P) to produce enolpyruvyl shikimate-3-phosphate and inorganic phosphate. In Xanthomonas axonopodis pv. citri (strain 306), this protein is 3-phosphoshikimate 1-carboxyvinyltransferase.